Consider the following 193-residue polypeptide: Potassium-transporting ATPase KdpC subunit (193 aa).

A helical transmembrane segment spans residues 8 to 28 (VVLLIFLTLITGVAYPLLATG).

Belongs to the KdpC family. In terms of assembly, the system is composed of three essential subunits: KdpA, KdpB and KdpC.

The protein localises to the cell inner membrane. Functionally, part of the high-affinity ATP-driven potassium transport (or Kdp) system, which catalyzes the hydrolysis of ATP coupled with the electrogenic transport of potassium into the cytoplasm. This subunit acts as a catalytic chaperone that increases the ATP-binding affinity of the ATP-hydrolyzing subunit KdpB by the formation of a transient KdpB/KdpC/ATP ternary complex. This chain is Potassium-transporting ATPase KdpC subunit, found in Photorhabdus laumondii subsp. laumondii (strain DSM 15139 / CIP 105565 / TT01) (Photorhabdus luminescens subsp. laumondii).